Here is a 434-residue protein sequence, read N- to C-terminus: APETALA2-like protein 2 (434 aa).

The disordered stretch occupies residues 1-116; sequence MLLDLNVESP…KTRRGPRSRS (116 aa). Positions 12-23 are enriched in low complexity; it reads RSGTSSSSVLNS. The segment covering 25–38 has biased composition (gly residues); it reads DAGGGGGGGGGGGL. The segment covering 72-87 has biased composition (pro residues); the sequence is LPPPPPAAPSPAPAWQ. A compositionally biased stretch (basic residues) spans 104 to 113; sequence VAKKTRRGPR. Positions 106 to 115 match the Nuclear localization signal motif; sequence KKTRRGPRSR. 2 DNA-binding regions (AP2/ERF) span residues 118-174 and 210-267; these read QYRG…INFN and KFRG…TNFE. An EAR motif is present at residues 291-295; sequence LDLRI.

The protein belongs to the AP2/ERF transcription factor family. AP2 subfamily. In terms of assembly, may form homodimer. Interacts with TPR2/ASP1.

It is found in the nucleus. Functionally, probable transcription factor. Involved in spikelet transition. Together with SNB, controls synergistically inflorescence architecture and floral meristem establishment via the regulation of spatio-temporal expression of B- and E-function floral organ identity genes in the lodicules and of spikelet meristem genes. Prevents lemma and palea elongation as well as grain growth. This chain is APETALA2-like protein 2, found in Oryza sativa subsp. indica (Rice).